The chain runs to 350 residues: MKKAVVLSAVALLSGVCAVADESVLIDFAKLNADIMADKSGGMTHNRRTVLDYASLADTSYTDEQKALMRSSLAVAQWEVVLNSSARNPVAHAASRVIEAPVSEGAKSFAGERVLGVRVLFPTWDSNANAMIKPAFVIPAYEVMAQVDDQGNVQAPTEEEKASGKGRFEDGYGVVKNVGVLKSIAVNTYGMNYPHGLYVMMRDQDGEVHRYFMGYLLFDSWKELVWNNPSYISDVRSREVRLYPVYPASTPHVVFEGFMVTRDAAHAGGDYVGYFKDVKIIYDKAVLSTVRDFADEDLWGIQARREAERKRVEVARFGQQQVLRYIEQEKLATEVGFTPSGGAQRQEEQQ.

A signal peptide spans 1–20 (MKKAVVLSAVALLSGVCAVA).

In terms of assembly, the flagellum consists of an outer layer composed of repeating units of FlaA around a core that contains several antigenically related polypeptides.

It is found in the periplasmic flagellum. It localises to the periplasm. Its function is as follows. Component of the outer layer of the flagella. The sequence is that of Flagellar filament outer layer protein (flaA) from Treponema pallidum (strain Nichols).